The primary structure comprises 364 residues: S-adenosylmethionine:tRNA ribosyltransferase-isomerase (364 aa).

This sequence belongs to the QueA family. In terms of assembly, monomer.

The protein localises to the cytoplasm. The enzyme catalyses 7-aminomethyl-7-carbaguanosine(34) in tRNA + S-adenosyl-L-methionine = epoxyqueuosine(34) in tRNA + adenine + L-methionine + 2 H(+). The protein operates within tRNA modification; tRNA-queuosine biosynthesis. Transfers and isomerizes the ribose moiety from AdoMet to the 7-aminomethyl group of 7-deazaguanine (preQ1-tRNA) to give epoxyqueuosine (oQ-tRNA). In Bradyrhizobium sp. (strain BTAi1 / ATCC BAA-1182), this protein is S-adenosylmethionine:tRNA ribosyltransferase-isomerase.